A 414-amino-acid polypeptide reads, in one-letter code: Serine/threonine transporter SstT (414 aa).

The next 8 helical transmembrane spans lie at 16-36 (GSLV…AWVS), 46-66 (LGTL…LMLV), 84-104 (ILFL…VFSF), 143-163 (ALLN…GFAL), 180-200 (AVTF…FGLV), 219-239 (LVVL…LLVF), 300-320 (MAGA…TLGV), and 332-352 (VVAS…LLLI).

It belongs to the dicarboxylate/amino acid:cation symporter (DAACS) (TC 2.A.23) family.

Its subcellular location is the cell inner membrane. It catalyses the reaction L-serine(in) + Na(+)(in) = L-serine(out) + Na(+)(out). The catalysed reaction is L-threonine(in) + Na(+)(in) = L-threonine(out) + Na(+)(out). Functionally, involved in the import of serine and threonine into the cell, with the concomitant import of sodium (symport system). In Salmonella arizonae (strain ATCC BAA-731 / CDC346-86 / RSK2980), this protein is Serine/threonine transporter SstT.